Consider the following 214-residue polypeptide: Pyrrolidone-carboxylate peptidase (214 aa).

Active-site residues include E78, C141, and H165.

Belongs to the peptidase C15 family. As to quaternary structure, homotetramer.

The protein localises to the cytoplasm. It catalyses the reaction Release of an N-terminal pyroglutamyl group from a polypeptide, the second amino acid generally not being Pro.. Its function is as follows. Removes 5-oxoproline from various penultimate amino acid residues except L-proline. This is Pyrrolidone-carboxylate peptidase from Streptococcus pneumoniae (strain 70585).